Reading from the N-terminus, the 332-residue chain is HTH-type transcriptional regulator RegA (332 aa).

Positions 1-57 (MATSIKDVAREAGVSIATVSRVLNDIDVVNEDTKKKVLDAIKELGYRPNIVARSLKT) constitute an HTH lacI-type domain. Positions 5-24 (IKDVAREAGVSIATVSRVLN) form a DNA-binding region, H-T-H motif.

Involved in the regulation of amylase production. In Clostridium saccharobutylicum, this protein is HTH-type transcriptional regulator RegA (regA).